Here is a 667-residue protein sequence, read N- to C-terminus: YTH domain-containing protein ECT2 (667 aa).

2 disordered regions span residues glutamine 264–valine 305 and asparagine 379–aspartate 398. A compositionally biased stretch (low complexity) spans valine 267 to serine 285. A compositionally biased stretch (polar residues) spans arginine 286 to valine 305. One can recognise a YTH domain in the interval alanine 442–phenylalanine 579. Residues lysine 448 to tyrosine 450, aspartate 454, tryptophan 464 to alanine 465, asparagine 497, tryptophan 521, tryptophan 526, and tryptophan 534 contribute to the RNA site. Residues lysine 606–cysteine 667 are disordered. The segment covering valine 614–alanine 627 has biased composition (basic and acidic residues). Residues threonine 628 to alanine 639 are compositionally biased toward low complexity.

As to quaternary structure, interacts (via C-terminus) with CIPK1. As to expression, expressed in the shoot apex, at the sites of leaf formation, and in emerging leaves. Highly expressed in rapidly developing tissues.

It is found in the cytoplasm. It localises to the nucleus. Functionally, specifically recognizes and binds N6-methyladenosine (m6A)-containing RNAs, and regulates mRNA stability. M6A is a modification present at internal sites of mRNAs and some non-coding RNAs and plays a role in mRNA stability and processing. Binds preferentially in the 3'UTRs of target genes. May play dual roles in regulating 3'UTR processing in the nucleus and facilitating mRNA stability in the cytoplasm. Required for the correct timing of leaf formation and normal leaf morphology. Functions redundantly with ECT3. Required for proper trichome branching and morphology. Controls trichome morphology by binding transcripts related to trichome morphogenesis and affecting their stability. The sequence is that of YTH domain-containing protein ECT2 from Arabidopsis thaliana (Mouse-ear cress).